Reading from the N-terminus, the 154-residue chain is Deoxyuridine 5'-triphosphate nucleotidohydrolase (154 aa).

Substrate-binding positions include 64 to 66 (RSG), Asn-77, 81 to 83 (TID), and Lys-91.

Belongs to the dUTPase family. As to quaternary structure, homotrimer. Requires Mg(2+) as cofactor.

It carries out the reaction dUTP + H2O = dUMP + diphosphate + H(+). It functions in the pathway pyrimidine metabolism; dUMP biosynthesis; dUMP from dCTP (dUTP route): step 2/2. This enzyme is involved in nucleotide metabolism: it produces dUMP, the immediate precursor of thymidine nucleotides and it decreases the intracellular concentration of dUTP so that uracil cannot be incorporated into DNA. The polypeptide is Deoxyuridine 5'-triphosphate nucleotidohydrolase (Mycobacterium sp. (strain JLS)).